A 216-amino-acid chain; its full sequence is Maleylacetoacetate isomerase (216 aa).

Met-1 carries the post-translational modification N-acetylmethionine. In terms of domain architecture, GST N-terminal spans 4-87; the sequence is GKPVLYSYFR…YLEETRPIPR (84 aa). Glutathione contacts are provided by residues 14–19 and Gln-45; that span reads SSCSWR. Residue Lys-57 is modified to N6-succinyllysine. Glutathione-binding positions include Val-59, 71-72, Gln-111, and 115-117; these read QS and NLS. Residues 92–212 form the GST C-terminal domain; it reads DPQKRAIVRM…HPCRQPDTPA (121 aa). Phosphothreonine is present on Thr-136. Residue Ser-137 is modified to Phosphoserine. At Lys-177 the chain carries N6-succinyllysine. Ser-181 is modified (phosphoserine).

The protein belongs to the GST superfamily. Zeta family. In terms of assembly, homodimer. The cofactor is glutathione. The N-terminus is blocked.

The protein resides in the cytoplasm. It catalyses the reaction 4-maleylacetoacetate = 4-fumarylacetoacetate. The catalysed reaction is RX + glutathione = an S-substituted glutathione + a halide anion + H(+). The protein operates within amino-acid degradation; L-phenylalanine degradation; acetoacetate and fumarate from L-phenylalanine: step 5/6. Its function is as follows. Probable bifunctional enzyme showing minimal glutathione-conjugating activity with ethacrynic acid and 7-chloro-4-nitrobenz-2-oxa-1, 3-diazole and maleylacetoacetate isomerase activity. Also has low glutathione peroxidase activity with t-butyl and cumene hydroperoxides. Is able to catalyze the glutathione dependent oxygenation of dichloroacetic acid to glyoxylic acid. This chain is Maleylacetoacetate isomerase (Gstz1), found in Rattus norvegicus (Rat).